The primary structure comprises 254 residues: Thiazole synthase (254 aa).

K96 functions as the Schiff-base intermediate with DXP in the catalytic mechanism. 1-deoxy-D-xylulose 5-phosphate is bound by residues G157, 183-184 (AG), and 205-206 (NT).

This sequence belongs to the ThiG family. Homotetramer. Forms heterodimers with either ThiH or ThiS.

It is found in the cytoplasm. The enzyme catalyses [ThiS sulfur-carrier protein]-C-terminal-Gly-aminoethanethioate + 2-iminoacetate + 1-deoxy-D-xylulose 5-phosphate = [ThiS sulfur-carrier protein]-C-terminal Gly-Gly + 2-[(2R,5Z)-2-carboxy-4-methylthiazol-5(2H)-ylidene]ethyl phosphate + 2 H2O + H(+). It participates in cofactor biosynthesis; thiamine diphosphate biosynthesis. Functionally, catalyzes the rearrangement of 1-deoxy-D-xylulose 5-phosphate (DXP) to produce the thiazole phosphate moiety of thiamine. Sulfur is provided by the thiocarboxylate moiety of the carrier protein ThiS. In vitro, sulfur can be provided by H(2)S. In Bacillus velezensis (strain DSM 23117 / BGSC 10A6 / LMG 26770 / FZB42) (Bacillus amyloliquefaciens subsp. plantarum), this protein is Thiazole synthase.